The following is a 125-amino-acid chain: Fluoride-specific ion channel FluC (125 aa).

4 consecutive transmembrane segments (helical) span residues 4–24, 32–52, 68–88, and 100–120; these read ILLV…VGLW, AFPW…GFLA, FLIT…LDAI, and LAYI…GLAL. Gly75 and Thr78 together coordinate Na(+).

Belongs to the fluoride channel Fluc/FEX (TC 1.A.43) family.

The protein localises to the cell inner membrane. The enzyme catalyses fluoride(in) = fluoride(out). With respect to regulation, na(+) is not transported, but it plays an essential structural role and its presence is essential for fluoride channel function. Its function is as follows. Fluoride-specific ion channel. Important for reducing fluoride concentration in the cell, thus reducing its toxicity. The polypeptide is Fluoride-specific ion channel FluC (Rhizobium meliloti (strain 1021) (Ensifer meliloti)).